The chain runs to 223 residues: Methanol utilization control regulatory protein MoxX (223 aa).

In terms of domain architecture, Response regulatory spans 16–133 (QILIVDDHPV…EICAAFTEVA (118 aa)). Positions 155–220 (PGTSAPRLTG…DLVVKGIRYF (66 aa)) constitute an HTH luxR-type domain. The segment at residues 179 to 198 (YRDIADRACISYKTVSNVSL) is a DNA-binding region (H-T-H motif).

In terms of processing, phosphorylated by MoxY.

Its subcellular location is the cytoplasm. Member of the two-component regulatory system MoxY/MoxX probably involved in the regulation of the methanol dehydrogenase expression. The polypeptide is Methanol utilization control regulatory protein MoxX (moxX) (Paracoccus denitrificans).